Reading from the N-terminus, the 221-residue chain is Urease accessory protein UreF (221 aa).

The protein belongs to the UreF family. In terms of assembly, ureD, UreF and UreG form a complex that acts as a GTP-hydrolysis-dependent molecular chaperone, activating the urease apoprotein by helping to assemble the nickel containing metallocenter of UreC. The UreE protein probably delivers the nickel.

The protein localises to the cytoplasm. Required for maturation of urease via the functional incorporation of the urease nickel metallocenter. The protein is Urease accessory protein UreF of Aliivibrio fischeri (strain MJ11) (Vibrio fischeri).